The sequence spans 338 residues: Anthranilate phosphoribosyltransferase (338 aa).

5-phospho-alpha-D-ribose 1-diphosphate is bound by residues G78, G81–D82, S86, N88–T91, K106–S114, and S118. G78 is an anthranilate binding site. Residue S90 coordinates Mg(2+). N109 contributes to the anthranilate binding site. An anthranilate-binding site is contributed by R163. Mg(2+)-binding residues include D222 and E223.

The protein belongs to the anthranilate phosphoribosyltransferase family. Homodimer. Mg(2+) is required as a cofactor.

The enzyme catalyses N-(5-phospho-beta-D-ribosyl)anthranilate + diphosphate = 5-phospho-alpha-D-ribose 1-diphosphate + anthranilate. Its pathway is amino-acid biosynthesis; L-tryptophan biosynthesis; L-tryptophan from chorismate: step 2/5. Its function is as follows. Catalyzes the transfer of the phosphoribosyl group of 5-phosphorylribose-1-pyrophosphate (PRPP) to anthranilate to yield N-(5'-phosphoribosyl)-anthranilate (PRA). This is Anthranilate phosphoribosyltransferase from Staphylococcus haemolyticus (strain JCSC1435).